We begin with the raw amino-acid sequence, 494 residues long: Aspartyl/glutamyl-tRNA(Asn/Gln) amidotransferase subunit B (494 aa).

The segment at 475–494 is disordered; sequence TSGRADPKATNQMLAKKLKG.

Belongs to the GatB/GatE family. GatB subfamily. Heterotrimer of A, B and C subunits.

It catalyses the reaction L-glutamyl-tRNA(Gln) + L-glutamine + ATP + H2O = L-glutaminyl-tRNA(Gln) + L-glutamate + ADP + phosphate + H(+). The catalysed reaction is L-aspartyl-tRNA(Asn) + L-glutamine + ATP + H2O = L-asparaginyl-tRNA(Asn) + L-glutamate + ADP + phosphate + 2 H(+). In terms of biological role, allows the formation of correctly charged Asn-tRNA(Asn) or Gln-tRNA(Gln) through the transamidation of misacylated Asp-tRNA(Asn) or Glu-tRNA(Gln) in organisms which lack either or both of asparaginyl-tRNA or glutaminyl-tRNA synthetases. The reaction takes place in the presence of glutamine and ATP through an activated phospho-Asp-tRNA(Asn) or phospho-Glu-tRNA(Gln). The polypeptide is Aspartyl/glutamyl-tRNA(Asn/Gln) amidotransferase subunit B (Acaryochloris marina (strain MBIC 11017)).